Here is a 359-residue protein sequence, read N- to C-terminus: Phospho-N-acetylmuramoyl-pentapeptide-transferase (359 aa).

10 helical membrane-spanning segments follow: residues 3-23 (QILIAVAIALAVAILLTPVLI), 55-75 (VAIIAGIWVSYFGTHLVGVLM), 84-104 (GLLVLGLATSLGVVGFLDDLI), 117-137 (TAKTVGILVAAVLFGVLALQF), 156-176 (IATVTLAPAVFVLFCVVVVSA), 190-210 (LAAGAMAMVCAAYVLITFWQF), 231-251 (LAIIAAATAGACIGFLWWNAA), 255-275 (IFMGDTGSLALGGIIAGLSVT), 283-303 (VVLGALFVAEVTSVVVQILAF), and 330-350 (VIIRFWLLTAIACGLGVALFY).

The protein belongs to the glycosyltransferase 4 family. MraY subfamily. The cofactor is Mg(2+).

Its subcellular location is the cell membrane. The enzyme catalyses UDP-N-acetyl-alpha-D-muramoyl-L-alanyl-gamma-D-glutamyl-meso-2,6-diaminopimeloyl-D-alanyl-D-alanine + di-trans,octa-cis-undecaprenyl phosphate = di-trans,octa-cis-undecaprenyl diphospho-N-acetyl-alpha-D-muramoyl-L-alanyl-D-glutamyl-meso-2,6-diaminopimeloyl-D-alanyl-D-alanine + UMP. It functions in the pathway cell wall biogenesis; peptidoglycan biosynthesis. Its function is as follows. Catalyzes the initial step of the lipid cycle reactions in the biosynthesis of the cell wall peptidoglycan: transfers peptidoglycan precursor phospho-MurNAc-pentapeptide from UDP-MurNAc-pentapeptide onto the lipid carrier undecaprenyl phosphate, yielding undecaprenyl-pyrophosphoryl-MurNAc-pentapeptide, known as lipid I. In Mycolicibacterium gilvum (strain PYR-GCK) (Mycobacterium gilvum (strain PYR-GCK)), this protein is Phospho-N-acetylmuramoyl-pentapeptide-transferase.